Reading from the N-terminus, the 327-residue chain is Interleukin-12 subunit beta (327 aa).

Residues 1-22 (MHPQQLVVSWFSLVLLASPIVA) form the signal peptide. Residues 23–106 (IWELEKNVYI…LSRSLLLLHK (84 aa)) form the Ig-like C2-type domain. A disulfide bond links C50 and C90. N-linked (GlcNAc...) asparagine glycosylation occurs at N223. In terms of domain architecture, Fibronectin type-III spans 238 to 327 (PPKNLQLKPL…WSEWASVSCS (90 aa)).

The protein belongs to the IL-12B family. In terms of assembly, heterodimer with IL12A; disulfide-linked. The heterodimer is known as interleukin IL-12. Heterodimer with IL23A; disulfide-linked. The heterodimer is known as interleukin IL-23. Also secreted as a monomer. Interacts with NBR1; this interaction promotes IL-12 secretion.

Functionally, cytokine that can act as a growth factor for activated T and NK cells, enhance the lytic activity of NK/lymphokine-activated killer cells, and stimulate the production of IFN-gamma by resting PBMC. Its function is as follows. Associates with IL23A to form the IL-23 interleukin, a heterodimeric cytokine which functions in innate and adaptive immunity. IL-23 may constitute with IL-17 an acute response to infection in peripheral tissues. IL-23 binds to a heterodimeric receptor complex composed of IL12RB1 and IL23R, activates the Jak-Stat signaling cascade, stimulates memory rather than naive T-cells and promotes production of pro-inflammatory cytokines. IL-23 induces autoimmune inflammation and thus may be responsible for autoimmune inflammatory diseases and may be important for tumorigenesis. The sequence is that of Interleukin-12 subunit beta (IL12B) from Bubalus bubalis (Domestic water buffalo).